We begin with the raw amino-acid sequence, 313 residues long: WD repeat-containing protein 82 (313 aa).

WD repeat units follow at residues 19 to 58, 105 to 144, 146 to 184, 192 to 231, 236 to 276, and 280 to 313; these read ENSD…PKRT, GHSK…CQGL, HLQG…KGPF, DRTC…VMHT, ANSK…KVAV, and KHTG…TIDD.

This sequence belongs to the WD repeat SWD2 family. Component of the SET1/COMPASS complex, at least composed of the catalytic subunit (SETD1A or SETD1B), WDR5, WDR82, RBBP5, ASH2L/ASH2, CXXC1/CFP1, HCFC1 and DPY30. Component of the PNUTS-PP1 phosphatase complex, composed of PPP1R10/PNUTS, TOX4, WDR82, and PPP1CA or PPP1CB or PPP1CC. Associated with multiple protein complexes including an RNA polymerase II complex, MLL3/MLL4 complex and a chaperonin-containing TCP1 complex. Interacts with SETD1B (via N-terminal region); the interaction is direct. Interacts with SETD1A (via N-terminal region); the interaction is direct. Interacts with CUL4B. Interacts with RBBP5. Interacts with POLR2B. Interacts with hyperphosphorylated C-terminal domain (CTD) of RNA polymerase II large subunit (POLR2A). Binds specifically to CTD heptad repeats phosphorylated on 'Ser-5' of each heptad. SETD1A enhances its interaction with POLR2A. Interacts with PPP1R10/PNUTS. Interacts with PPP1CA in the presence of PPP1R10/PNUTS. Interacts with ZC3H4; interaction is independent of the SET1 complex and promotes transcription termination of long non-coding RNAs (lncRNAs).

The protein localises to the nucleus. Its subcellular location is the chromosome. It is found in the cytoplasm. Regulatory component of the SET1/COMPASS complex implicated in the tethering of this complex to transcriptional start sites of active genes. Facilitates histone H3 'Lys-4' methylation (H3K4me) via recruitment of the SETD1A or SETD1B to the 'Ser-5' phosphorylated C-terminal domain (CTD) of RNA polymerase II large subunit (POLR2A). Component of the PNUTS-PP1 protein phosphatase complex, a protein phosphatase 1 (PP1) complex that promotes RNA polymerase II transcription pause-release, allowing transcription elongation. PNUTS-PP1 also plays a role in the control of chromatin structure and cell cycle progression during the transition from mitosis into interphase. Together with ZC3H4, but independently of the SET1 complex, part of a transcription termination checkpoint that promotes transcription termination of long non-coding RNAs (lncRNAs). The transcription termination checkpoint is activated by the inefficiently spliced first exon of lncRNAs and promotes transcription termination of lncRNAs and their subsequent degradation by the exosome. In Homo sapiens (Human), this protein is WD repeat-containing protein 82.